A 70-amino-acid chain; its full sequence is DNA-directed RNA polymerase subunit omega (70 aa).

This sequence belongs to the RNA polymerase subunit omega family. In terms of assembly, the RNAP catalytic core consists of 2 alpha, 1 beta, 1 beta' and 1 omega subunit. When a sigma factor is associated with the core the holoenzyme is formed, which can initiate transcription.

It catalyses the reaction RNA(n) + a ribonucleoside 5'-triphosphate = RNA(n+1) + diphosphate. Functionally, promotes RNA polymerase assembly. Latches the N- and C-terminal regions of the beta' subunit thereby facilitating its interaction with the beta and alpha subunits. The chain is DNA-directed RNA polymerase subunit omega from Staphylococcus epidermidis (strain ATCC 35984 / DSM 28319 / BCRC 17069 / CCUG 31568 / BM 3577 / RP62A).